Here is a 207-residue protein sequence, read N- to C-terminus: Phenazine biosynthesis protein PhzD1 (207 aa).

Asp38 (proton donor) is an active-site residue. Substrate-binding positions include Gln78, Arg87, Lys122, and 151–155 (YAHVG).

Belongs to the isochorismatase family. As to quaternary structure, homodimer.

It catalyses the reaction (2S)-2-amino-4-deoxychorismate + H2O = (5S,6S)-6-amino-5-hydroxycyclohexa-1,3-diene-1-carboxyate + pyruvate. It functions in the pathway antibiotic biosynthesis; phenazine biosynthesis. Its function is as follows. Involved in the biosynthesis of the antibiotic phenazine, a nitrogen-containing heterocyclic molecule. PhzD1 (operon phzA1B1C1E1F1G1) has a role in the biosynthesis of the phenazine during planktonic growth. Catalyzes the hydrolysis of the vinyl ether functional group of 2-amino-2-deoxyisochorismate (ADIC), yielding pyruvate and trans-2,3-dihydro-3-hydroxyanthranilic acid (DHHA). Also able to act on isochorismate, chorismate and 4-amino-4-deoxychorismate (ADC) as substrates. This chain is Phenazine biosynthesis protein PhzD1, found in Pseudomonas aeruginosa (strain ATCC 15692 / DSM 22644 / CIP 104116 / JCM 14847 / LMG 12228 / 1C / PRS 101 / PAO1).